A 537-amino-acid chain; its full sequence is GTPase LSG1-1 (537 aa).

Residues 158-362 (WRQLWRVLER…LCDCPGLVFP (205 aa)) form the CP-type G domain. The DARXP motif motif lies at 176–180 (DARDP). Residues 206–209 (NKAD) are G4. 206-209 (NKAD) serves as a coordination point for GTP. The interval 234-236 (SAK) is G5. Positions 311-318 (GYPNVGKS) are G1. 314–319 (NVGKSS) contacts GTP. Residues 337–341 (GKTKH) are G2. Residues 355–358 (DCPG) form a G3 region. GTP is bound at residue G358. The interval 484 to 508 (LGAETREGSQTEKKGEEAPSLGLDQ) is disordered. The segment covering 487–500 (ETREGSQTEKKGEE) has biased composition (basic and acidic residues).

The protein belongs to the TRAFAC class YlqF/YawG GTPase family. Ubiquitous, with the highest expression in stem and hypsophyll on day 66.

Its subcellular location is the cytoplasm. Its function is as follows. GTPase that might be redundant with LSG1-2 for ribosome biogenesis. Binds to 23S rRNA. In Arabidopsis thaliana (Mouse-ear cress), this protein is GTPase LSG1-1.